The primary structure comprises 439 residues: Xylose isomerase (439 aa).

Catalysis depends on residues H99 and D102. Mg(2+)-binding residues include E230, E266, H269, D294, D305, D307, and D337.

Belongs to the xylose isomerase family. As to quaternary structure, homotetramer. Mg(2+) is required as a cofactor.

It localises to the cytoplasm. The enzyme catalyses alpha-D-xylose = alpha-D-xylulofuranose. The sequence is that of Xylose isomerase from Oceanobacillus iheyensis (strain DSM 14371 / CIP 107618 / JCM 11309 / KCTC 3954 / HTE831).